Here is a 242-residue protein sequence, read N- to C-terminus: Caffeoyl-CoA O-methyltransferase 2 (242 aa).

Substrate is bound at residue lysine 16. S-adenosyl-L-methionine-binding positions include threonine 58, glutamate 80, 82-83, serine 88, aspartate 106, and alanine 135; that span reads GV. Aspartate 158 lines the substrate pocket. Aspartate 158 contributes to the a divalent metal cation binding site. An S-adenosyl-L-methionine-binding site is contributed by aspartate 160. Aspartate 184 and asparagine 185 together coordinate a divalent metal cation. Asparagine 189 provides a ligand contact to substrate.

This sequence belongs to the class I-like SAM-binding methyltransferase superfamily. Cation-dependent O-methyltransferase family. CCoAMT subfamily. The cofactor is Mg(2+). In terms of tissue distribution, mostly expressed in the bottom and middle parts of the stems.

It carries out the reaction (E)-caffeoyl-CoA + S-adenosyl-L-methionine = (E)-feruloyl-CoA + S-adenosyl-L-homocysteine + H(+). It participates in aromatic compound metabolism; phenylpropanoid biosynthesis. Functionally, methylates caffeoyl-CoA to feruloyl-CoA and 5-hydroxyferuloyl-CoA to sinapoyl-CoA. Plays a role in the synthesis of feruloylated polysaccharides. Involved in the reinforcement of the plant cell wall. Also involved in the responding to wounding or pathogen challenge by the increased formation of cell wall-bound ferulic acid polymers. Methylates 5-hydroxyferulolyl-CoA more efficiently than caffeoyl-CoA. The protein is Caffeoyl-CoA O-methyltransferase 2 (CCOAOMT2) of Nicotiana tabacum (Common tobacco).